Here is a 72-residue protein sequence, read N- to C-terminus: Translation initiation factor IF-1 (72 aa).

The 72-residue stretch at 1-72 (MAKQDVIELE…TRGRITYRYK (72 aa)) folds into the S1-like domain.

It belongs to the IF-1 family. In terms of assembly, component of the 30S ribosomal translation pre-initiation complex which assembles on the 30S ribosome in the order IF-2 and IF-3, IF-1 and N-formylmethionyl-tRNA(fMet); mRNA recruitment can occur at any time during PIC assembly.

Its subcellular location is the cytoplasm. In terms of biological role, one of the essential components for the initiation of protein synthesis. Stabilizes the binding of IF-2 and IF-3 on the 30S subunit to which N-formylmethionyl-tRNA(fMet) subsequently binds. Helps modulate mRNA selection, yielding the 30S pre-initiation complex (PIC). Upon addition of the 50S ribosomal subunit IF-1, IF-2 and IF-3 are released leaving the mature 70S translation initiation complex. This Staphylococcus aureus (strain USA300 / TCH1516) protein is Translation initiation factor IF-1.